The sequence spans 74 residues: MPVINIEDLTEKDKLKMEVDQLKKEVTLERMLVSKCCEEVRDYVEERSGEDPLVKGIPEDKNPFKELKGGCVIS.

The residue at position 71 (Cys71) is a Cysteine methyl ester. Residue Cys71 is the site of S-farnesyl cysteine attachment. Positions 72–74 (VIS) are cleaved as a propeptide — removed in mature form.

The protein belongs to the G protein gamma family. G proteins are composed of 3 units, alpha, beta and gamma. In terms of tissue distribution, retinal rod outer segment.

It is found in the cell membrane. Functionally, guanine nucleotide-binding proteins (G proteins) are involved as a modulator or transducer in various transmembrane signaling systems. The beta and gamma chains are required for the GTPase activity, for replacement of GDP by GTP, and for G protein-effector interaction. The sequence is that of Guanine nucleotide-binding protein G(T) subunit gamma-T1 (GNGT1) from Canis lupus familiaris (Dog).